The following is a 515-amino-acid chain: MSNVAVINQQHRLIKITSSADIVLIGAGIMSATFGMFLTILEPTWRIHIYERLSQPAQESSNVWNNAGTGHAAFCELNYTQYNNKNCSVDISKAIAVNEAFEISRQFWAYLVEIKVLKYPSSFINNVPHMSFVWGEENVCFLKKRFQALLNSVLFSGMVYSEDLQQIRQWTPLIIDGRNVSQKIAATRMEMGTDVNFGALTQQLLNELKKNVNFKMYLQHDVVSVQNNNDATWDVHVIDRRCKHKKCIRTNYVFIGAGGRSLNLLQTSGIPEVYGYAGFPVGGQFLVTKNPKIVEQHLAKVYGKASVNAPPMSVPHIDTRILNGEKILLFGPFATFSSKFLKYGSWLDLFHSLNKHNVIPILQAGIDNFDLIKYLISQLVMSNMNRIDELREYYPTVNPSDWTLVTAGQRVQIIKRNSNRRGILQFGTEVVNSGDGTLSALLGASPGASTVVSIILQLLNTMFNNKINSDVWKNKLIDMIPSYTKNLNGDLILVNKIRQYTCNALKLNYIEAIDR.

The protein belongs to the MQO family. It depends on FAD as a cofactor.

The catalysed reaction is (S)-malate + a quinone = a quinol + oxaloacetate. It participates in carbohydrate metabolism; tricarboxylic acid cycle; oxaloacetate from (S)-malate (quinone route): step 1/1. This Blochmanniella pennsylvanica (strain BPEN) protein is Probable malate:quinone oxidoreductase.